Here is a 710-residue protein sequence, read N- to C-terminus: Protein phosphatase 1 regulatory subunit 37 (710 aa).

Residues 1-12 show a composition bias toward pro residues; the sequence is MEIPPQEAPPGP. The interval 1–46 is disordered; the sequence is MEIPPQEAPPGPGADADADAEAEEAPAEAGSSSGASPPTDGRLKAA. Residues 16 to 26 show a composition bias toward acidic residues; sequence ADADAEAEEAP. A compositionally biased stretch (low complexity) spans 27–38; that stretch reads AEAGSSSGASPP. Residues Ser-54 and Ser-60 each carry the phosphoserine modification. 5 LRR repeats span residues 224–244, 252–273, 281–301, 310–330, and 338–358; these read SLAV…MLLA, NLQE…AQLG, SLQI…AYIC, GLVT…AFLG, and SLET…RNLK. The disordered stretch occupies residues 487 to 677; that stretch reads PLEESGDLPA…APPGLEAKGS (191 aa). A compositionally biased stretch (acidic residues) spans 512–531; that stretch reads SDSDSDSDREEQEEEEEDQS. Low complexity predominate over residues 543–565; it reads SSSAPCPALLPSTDSLGPGDKSP. Ser-581 is subject to Phosphoserine. Positions 603 to 624 are enriched in pro residues; the sequence is PPVPPTSVSSPPPSPPSPPASP. Polar residues predominate over residues 637–649; that stretch reads SEAQPQTEPSQAG. Residues 656 to 676 show a composition bias toward low complexity; the sequence is LKPEFALALAPEAPPGLEAKG.

This sequence belongs to the PPP1R37 family. In terms of assembly, interacts with PPP1CA.

Inhibits phosphatase activity of protein phosphatase 1 (PP1) complexes. The polypeptide is Protein phosphatase 1 regulatory subunit 37 (Ppp1r37) (Rattus norvegicus (Rat)).